A 417-amino-acid polypeptide reads, in one-letter code: Serine hydroxymethyltransferase (417 aa).

Residues leucine 121 and 125–127 (GHL) contribute to the (6S)-5,6,7,8-tetrahydrofolate site. Lysine 229 bears the N6-(pyridoxal phosphate)lysine mark. A (6S)-5,6,7,8-tetrahydrofolate-binding site is contributed by 355–357 (SPF).

The protein belongs to the SHMT family. Homodimer. Pyridoxal 5'-phosphate is required as a cofactor.

The protein localises to the cytoplasm. It catalyses the reaction (6R)-5,10-methylene-5,6,7,8-tetrahydrofolate + glycine + H2O = (6S)-5,6,7,8-tetrahydrofolate + L-serine. The protein operates within one-carbon metabolism; tetrahydrofolate interconversion. Its pathway is amino-acid biosynthesis; glycine biosynthesis; glycine from L-serine: step 1/1. In terms of biological role, catalyzes the reversible interconversion of serine and glycine with tetrahydrofolate (THF) serving as the one-carbon carrier. This reaction serves as the major source of one-carbon groups required for the biosynthesis of purines, thymidylate, methionine, and other important biomolecules. Also exhibits THF-independent aldolase activity toward beta-hydroxyamino acids, producing glycine and aldehydes, via a retro-aldol mechanism. The sequence is that of Serine hydroxymethyltransferase from Yersinia pestis bv. Antiqua (strain Antiqua).